The sequence spans 257 residues: Dihydroorotate dehydrogenase B (NAD(+)), electron transfer subunit (257 aa).

The FAD-binding FR-type domain occupies 2–102 (IGRERMTVAS…LGPLGNGFPL (101 aa)). Residues 53–56 (RPLS), 70–72 (IYR), and 77–78 (GT) contribute to the FAD site. [2Fe-2S] cluster is bound by residues C221, C226, C229, and C244.

This sequence belongs to the PyrK family. As to quaternary structure, heterotetramer of 2 PyrK and 2 PyrD type B subunits. It depends on [2Fe-2S] cluster as a cofactor. Requires FAD as cofactor.

It participates in pyrimidine metabolism; UMP biosynthesis via de novo pathway; orotate from (S)-dihydroorotate (NAD(+) route): step 1/1. Responsible for channeling the electrons from the oxidation of dihydroorotate from the FMN redox center in the PyrD type B subunit to the ultimate electron acceptor NAD(+). This Bacillus caldolyticus protein is Dihydroorotate dehydrogenase B (NAD(+)), electron transfer subunit.